The primary structure comprises 266 residues: NAD-capped RNA hydrolase NudC (266 aa).

R74 contacts substrate. Zn(2+) contacts are provided by C103, C106, C121, and C124. Y129 is a binding site for substrate. Positions 130–253 (PRVSPCIIVA…TIARVLIDET (124 aa)) constitute a Nudix hydrolase domain. Residues A163, E179, and E183 each contribute to the a divalent metal cation site. Positions 164–185 (GFVEAGETLEQCVAREVEEETG) match the Nudix box motif. Position 197-204 (197-204 (QPWAFPSN)) interacts with substrate. An a divalent metal cation-binding site is contributed by E224. A substrate-binding site is contributed by A246.

Belongs to the Nudix hydrolase family. NudC subfamily. In terms of assembly, homodimer. The cofactor is Mg(2+). Requires Mn(2+) as cofactor. Zn(2+) is required as a cofactor.

It catalyses the reaction a 5'-end NAD(+)-phospho-ribonucleoside in mRNA + H2O = a 5'-end phospho-adenosine-phospho-ribonucleoside in mRNA + beta-nicotinamide D-ribonucleotide + 2 H(+). The enzyme catalyses NAD(+) + H2O = beta-nicotinamide D-ribonucleotide + AMP + 2 H(+). The catalysed reaction is NADH + H2O = reduced beta-nicotinamide D-ribonucleotide + AMP + 2 H(+). Its function is as follows. mRNA decapping enzyme that specifically removes the nicotinamide adenine dinucleotide (NAD) cap from a subset of mRNAs by hydrolyzing the diphosphate linkage to produce nicotinamide mononucleotide (NMN) and 5' monophosphate mRNA. The NAD-cap is present at the 5'-end of some mRNAs and stabilizes RNA against 5'-processing. Has preference for mRNAs with a 5'-end purine. Catalyzes the hydrolysis of a broad range of dinucleotide pyrophosphates. The chain is NAD-capped RNA hydrolase NudC from Photobacterium profundum (strain SS9).